Reading from the N-terminus, the 558-residue chain is NAD(P)H-quinone oxidoreductase chain 4 (558 aa).

14 helical membrane-spanning segments follow: residues 25–45 (FPWLSLSILFPIFGSLVVPFI), 56–76 (WYALGIALVTFLITVGAYLKG), 111–131 (LILLTSFITALAVLAAWPVSF), 133–153 (PKLFFFLILAMDGGQIAVFAV), 157–177 (LLFFLAWELELLPVYLLLAIW), 189–209 (FIIYTAGSSLFILLAALAMGF), 230–250 (GFQLLCYGGLLIAFGVKLPVV), 264–284 (TAPVHMLLAGILLKMGGYALL), 298–318 (FAPLLIVLGVVNIIYAALTSF), 327–347 (IAYSSISHMGFVLIGIGSFSS), 353–373 (AMLQMVSHGLIGASLFFLVGA), 395–417 (IMFALWTTCSLASLALPGMSGFV), 438–458 (IVIAGLAAIGVILTPIYLLSM), and 485–505 (IYVIGSLLVPIIGIGLYPRIM).

It belongs to the complex I subunit 4 family.

It is found in the cellular thylakoid membrane. The catalysed reaction is a plastoquinone + NADH + (n+1) H(+)(in) = a plastoquinol + NAD(+) + n H(+)(out). It catalyses the reaction a plastoquinone + NADPH + (n+1) H(+)(in) = a plastoquinol + NADP(+) + n H(+)(out). NDH-1 shuttles electrons from NAD(P)H, via FMN and iron-sulfur (Fe-S) centers, to quinones in the respiratory chain. The immediate electron acceptor for the enzyme in this species is believed to be plastoquinone. Couples the redox reaction to proton translocation (for every two electrons transferred, four hydrogen ions are translocated across the cytoplasmic membrane), and thus conserves the redox energy in a proton gradient. This Prochlorococcus marinus (strain MIT 9211) protein is NAD(P)H-quinone oxidoreductase chain 4.